We begin with the raw amino-acid sequence, 37 residues long: Cytochrome b6-f complex subunit 5 (37 aa).

Residues 5-25 (LPSGIVLGLIPITLAGLFVTA) form a helical membrane-spanning segment.

It belongs to the PetG family. In terms of assembly, the 4 large subunits of the cytochrome b6-f complex are cytochrome b6, subunit IV (17 kDa polypeptide, PetD), cytochrome f and the Rieske protein, while the 4 small subunits are PetG, PetL, PetM and PetN. The complex functions as a dimer.

Its subcellular location is the plastid. It localises to the chloroplast thylakoid membrane. In terms of biological role, component of the cytochrome b6-f complex, which mediates electron transfer between photosystem II (PSII) and photosystem I (PSI), cyclic electron flow around PSI, and state transitions. PetG is required for either the stability or assembly of the cytochrome b6-f complex. In Pinus thunbergii (Japanese black pine), this protein is Cytochrome b6-f complex subunit 5.